A 161-amino-acid polypeptide reads, in one-letter code: Transcriptional regulator MraZ (161 aa).

SpoVT-AbrB domains lie at 7-55 (RYTN…GPAF) and 84-127 (SAEL…EPGA).

This sequence belongs to the MraZ family. As to quaternary structure, forms oligomers.

The protein localises to the cytoplasm. Its subcellular location is the nucleoid. This chain is Transcriptional regulator MraZ, found in Parvibaculum lavamentivorans (strain DS-1 / DSM 13023 / NCIMB 13966).